The primary structure comprises 125 residues: Small ribosomal subunit protein uS12 (125 aa).

A disordered region spans residues 1–26 (MPTINQLVRKSRKTVKAQSDSPALKN). The residue at position 89 (Asp89) is a 3-methylthioaspartic acid.

This sequence belongs to the universal ribosomal protein uS12 family. Part of the 30S ribosomal subunit. Contacts proteins S8 and S17. May interact with IF1 in the 30S initiation complex.

In terms of biological role, with S4 and S5 plays an important role in translational accuracy. Its function is as follows. Interacts with and stabilizes bases of the 16S rRNA that are involved in tRNA selection in the A site and with the mRNA backbone. Located at the interface of the 30S and 50S subunits, it traverses the body of the 30S subunit contacting proteins on the other side and probably holding the rRNA structure together. The combined cluster of proteins S8, S12 and S17 appears to hold together the shoulder and platform of the 30S subunit. The protein is Small ribosomal subunit protein uS12 of Clostridium tetani (strain Massachusetts / E88).